Reading from the N-terminus, the 117-residue chain is G antigen 12J (117 aa).

Residues 1–117 (MSWRGRSTYY…PEEGEKQSQC (117 aa)) are disordered. Acidic residues-rich tracts occupy residues 32–45 (FSDE…EEGE) and 87–96 (ECEDGPDGQE). Residues 103–117 (EEVKTPEEGEKQSQC) show a composition bias toward basic and acidic residues.

Belongs to the GAGE family.

The polypeptide is G antigen 12J (GAGE12J) (Homo sapiens (Human)).